A 428-amino-acid polypeptide reads, in one-letter code: Sulfite exporter TauE/SafE family protein 6 (428 aa).

The next 11 helical transmembrane spans lie at 1–21 (MKTL…NANQ), 61–81 (ALVV…ASGI), 82–102 (GDGF…LKAA), 105–125 (FSAF…HFGC), 128–148 (LIDY…VSVG), 149–169 (VICN…VFLM), 245–265 (YWIL…LALS), 294–314 (VMSF…GMII), 332–352 (TSFM…LLGM), 356–376 (EAAY…LVFA), and 388–408 (IIVF…ASFG).

Belongs to the 4-toluene sulfonate uptake permease (TSUP) (TC 2.A.102) family.

It localises to the membrane. The protein is Sulfite exporter TauE/SafE family protein 6 of Arabidopsis thaliana (Mouse-ear cress).